We begin with the raw amino-acid sequence, 214 residues long: Leucyl/phenylalanyl-tRNA--protein transferase (214 aa).

The protein belongs to the L/F-transferase family.

The protein localises to the cytoplasm. The enzyme catalyses N-terminal L-lysyl-[protein] + L-leucyl-tRNA(Leu) = N-terminal L-leucyl-L-lysyl-[protein] + tRNA(Leu) + H(+). The catalysed reaction is N-terminal L-arginyl-[protein] + L-leucyl-tRNA(Leu) = N-terminal L-leucyl-L-arginyl-[protein] + tRNA(Leu) + H(+). It catalyses the reaction L-phenylalanyl-tRNA(Phe) + an N-terminal L-alpha-aminoacyl-[protein] = an N-terminal L-phenylalanyl-L-alpha-aminoacyl-[protein] + tRNA(Phe). In terms of biological role, functions in the N-end rule pathway of protein degradation where it conjugates Leu, Phe and, less efficiently, Met from aminoacyl-tRNAs to the N-termini of proteins containing an N-terminal arginine or lysine. This Cereibacter sphaeroides (strain ATCC 17029 / ATH 2.4.9) (Rhodobacter sphaeroides) protein is Leucyl/phenylalanyl-tRNA--protein transferase.